The chain runs to 227 residues: Testis-expressed protein 30 (227 aa).

This is Testis-expressed protein 30 (TEX30) from Homo sapiens (Human).